The sequence spans 568 residues: Potassium-transporting ATPase potassium-binding subunit (568 aa).

12 consecutive transmembrane segments (helical) span residues 7–27 (ITIGIFFLCVLALTRPLGGFL), 65–85 (HYALALLSFKIVCFVAVYAIL), 136–156 (GLTVQNFVSAAAGIAVAAAII), 179–199 (LYVLLPISVVLSLFYVFEGIP), 254–274 (LTNFVEMISIFAIGAGLTNVF), 285–305 (WAVFSAMSVLFFVGVTAVYWA), 332–352 (FGVAASALFAAVTTDASCGAV), 354–374 (AMHESFLPLGGMVPLINMMLG), 377–397 (IIGGVGAGLYGFILFAIIAVF), 423–443 (MLAVLCLPLVMLGFTAVAVVV), 487–507 (ITLGIGMMIGRFFVIVPALAI), and 530–550 (LFIGLVAGVIIIVGGLTFLPA).

It belongs to the KdpA family. The system is composed of three essential subunits: KdpA, KdpB and KdpC.

The protein resides in the cell inner membrane. Part of the high-affinity ATP-driven potassium transport (or Kdp) system, which catalyzes the hydrolysis of ATP coupled with the electrogenic transport of potassium into the cytoplasm. This subunit binds the periplasmic potassium ions and delivers the ions to the membrane domain of KdpB through an intramembrane tunnel. This is Potassium-transporting ATPase potassium-binding subunit from Granulibacter bethesdensis (strain ATCC BAA-1260 / CGDNIH1).